The following is a 502-amino-acid chain: Glycerol kinase (502 aa).

ADP is bound at residue Thr-14. Thr-14, Thr-15, and Ser-16 together coordinate ATP. Thr-14 is a sn-glycerol 3-phosphate binding site. Arg-18 is a binding site for ADP. Positions 84, 85, 136, and 246 each coordinate sn-glycerol 3-phosphate. Arg-84, Glu-85, Tyr-136, Asp-246, and Gln-247 together coordinate glycerol. Residues Thr-268 and Gly-311 each coordinate ADP. ATP is bound by residues Thr-268, Gly-311, Gln-315, and Gly-412. 2 residues coordinate ADP: Gly-412 and Asn-416.

The protein belongs to the FGGY kinase family. In terms of assembly, homotetramer and homodimer (in equilibrium). Heterodimer with EIIA-Glc. Binds 1 zinc ion per glycerol kinase EIIA-Glc dimer. The zinc ion is important for dimerization.

It catalyses the reaction glycerol + ATP = sn-glycerol 3-phosphate + ADP + H(+). It participates in polyol metabolism; glycerol degradation via glycerol kinase pathway; sn-glycerol 3-phosphate from glycerol: step 1/1. Its activity is regulated as follows. Activity of this regulatory enzyme is affected by several metabolites. Allosterically and non-competitively inhibited by fructose 1,6-bisphosphate (FBP) and unphosphorylated phosphocarrier protein EIIA-Glc (III-Glc), an integral component of the bacterial phosphotransferase (PTS) system. Its function is as follows. Key enzyme in the regulation of glycerol uptake and metabolism. Catalyzes the phosphorylation of glycerol to yield sn-glycerol 3-phosphate. This is Glycerol kinase from Escherichia coli O127:H6 (strain E2348/69 / EPEC).